The primary structure comprises 206 residues: Protein-methionine-sulfoxide reductase heme-binding subunit MsrQ (206 aa).

6 helical membrane-spanning segments follow: residues 10–30 (VFIA…SAVL), 42–62 (LGLG…LQKL), 75–95 (LGLW…VFVL), 110–130 (PYII…VTSN), 147–167 (LVYV…RADL), and 169–189 (EWAI…PPVM).

Belongs to the MsrQ family. Heterodimer of a catalytic subunit (MsrP) and a heme-binding subunit (MsrQ). The cofactor is FMN. Requires heme b as cofactor.

The protein localises to the cell inner membrane. Part of the MsrPQ system that repairs oxidized periplasmic proteins containing methionine sulfoxide residues (Met-O), using respiratory chain electrons. Thus protects these proteins from oxidative-stress damage caused by reactive species of oxygen and chlorine generated by the host defense mechanisms. MsrPQ is essential for the maintenance of envelope integrity under bleach stress, rescuing a wide series of structurally unrelated periplasmic proteins from methionine oxidation. MsrQ provides electrons for reduction to the reductase catalytic subunit MsrP, using the quinone pool of the respiratory chain. The chain is Protein-methionine-sulfoxide reductase heme-binding subunit MsrQ from Pseudomonas fluorescens (strain SBW25).